Reading from the N-terminus, the 146-residue chain is VHLTPEEKNAVTALWGKVNVDEVGGEALGRLLVVYPWTQRFFDSFGDLSSPAAVMGNPKVKAHGKKVLGAFSDGLNHLDNLKGTFAQLSELHCDKLHVDPENFKLLGNVLVCVLAHHFGKEFTPQVQAAYQKVVAGVANALAHKYH.

V1 is subject to N-acetylvaline. The Globin domain maps to H2 to H146. T12 is modified (phosphothreonine). Position 44 is a phosphoserine (S44). K59 is modified (N6-acetyllysine). H63 is a binding site for heme b. K82 carries the post-translational modification N6-acetyllysine. Residue H92 coordinates heme b. Residue C93 is modified to S-nitrosocysteine. K144 carries the post-translational modification N6-acetyllysine.

It belongs to the globin family. In terms of assembly, heterotetramer of two alpha chains and two beta chains. In terms of tissue distribution, red blood cells.

In terms of biological role, involved in oxygen transport from the lung to the various peripheral tissues. The sequence is that of Hemoglobin subunit beta (HBB) from Papio cynocephalus (Yellow baboon).